The following is a 780-amino-acid chain: Lon protease (780 aa).

Residues 11–204 (IPVLPLRDVV…RLMAIMESEI (194 aa)) enclose the Lon N-terminal domain. 356-363 (GPPGVGKT) contacts ATP. Residues 592–773 (KNQIGQVIGL…KEVLNLSLEN (182 aa)) form the Lon proteolytic domain. Residues Ser679 and Lys722 contribute to the active site.

It belongs to the peptidase S16 family. As to quaternary structure, homohexamer. Organized in a ring with a central cavity.

The protein localises to the cytoplasm. It catalyses the reaction Hydrolysis of proteins in presence of ATP.. Functionally, ATP-dependent serine protease that mediates the selective degradation of mutant and abnormal proteins as well as certain short-lived regulatory proteins. Required for cellular homeostasis and for survival from DNA damage and developmental changes induced by stress. Degrades polypeptides processively to yield small peptide fragments that are 5 to 10 amino acids long. Binds to DNA in a double-stranded, site-specific manner. In Buchnera aphidicola subsp. Baizongia pistaciae (strain Bp), this protein is Lon protease.